The sequence spans 454 residues: Ribosomal protein uS12 methylthiotransferase RimO (454 aa).

Positions 14–125 constitute an MTTase N-terminal domain; it reads SKVAFSHVGC…IAKVLDRVEQ (112 aa). The [4Fe-4S] cluster site is built by Cys-23, Cys-59, Cys-88, Cys-163, Cys-167, and Cys-170. In terms of domain architecture, Radical SAM core spans 149 to 378; the sequence is DKNKFVAYLR…ISVQQNISKD (230 aa). Residues 381 to 452 enclose the TRAM domain; that stretch reads QTYVGSKMKI…EYDLYGEIIK (72 aa).

Belongs to the methylthiotransferase family. RimO subfamily. [4Fe-4S] cluster is required as a cofactor.

Its subcellular location is the cytoplasm. It carries out the reaction L-aspartate(89)-[ribosomal protein uS12]-hydrogen + (sulfur carrier)-SH + AH2 + 2 S-adenosyl-L-methionine = 3-methylsulfanyl-L-aspartate(89)-[ribosomal protein uS12]-hydrogen + (sulfur carrier)-H + 5'-deoxyadenosine + L-methionine + A + S-adenosyl-L-homocysteine + 2 H(+). Functionally, catalyzes the methylthiolation of an aspartic acid residue of ribosomal protein uS12. The polypeptide is Ribosomal protein uS12 methylthiotransferase RimO (Prochlorococcus marinus (strain AS9601)).